We begin with the raw amino-acid sequence, 189 residues long: Chitin synthase 3 (189 aa).

Belongs to the chitin synthase family. Class II subfamily.

It localises to the cell membrane. The enzyme catalyses [(1-&gt;4)-N-acetyl-beta-D-glucosaminyl](n) + UDP-N-acetyl-alpha-D-glucosamine = [(1-&gt;4)-N-acetyl-beta-D-glucosaminyl](n+1) + UDP + H(+). Polymerizes chitin, a structural polymer of the cell wall and septum, by transferring the sugar moiety of UDP-GlcNAc to the non-reducing end of the growing chitin polymer. The protein is Chitin synthase 3 (CHS3) of Ajellomyces capsulatus (Darling's disease fungus).